A 521-amino-acid polypeptide reads, in one-letter code: Maturase K (521 aa).

It belongs to the intron maturase 2 family. MatK subfamily.

It localises to the plastid. It is found in the chloroplast. In terms of biological role, usually encoded in the trnK tRNA gene intron. Probably assists in splicing its own and other chloroplast group II introns. This Trillium catesbaei (Catesby's trillium) protein is Maturase K.